A 231-amino-acid polypeptide reads, in one-letter code: U1 small nuclear ribonucleoprotein C (231 aa).

The Matrin-type zinc-finger motif lies at 4–36 (YYCEYCHSYLTHDTLSVRKSHLVGKNHLRITAD). The span at 49–61 (HNHKRRHIGKRGR) shows a compositional bias: basic residues. 3 disordered regions span residues 49–71 (HNHK…SQNE), 137–177 (PQRA…LEPP), and 205–231 (ESKK…RYGN).

Belongs to the U1 small nuclear ribonucleoprotein C family. In terms of assembly, U1 snRNP is composed of the 7 core Sm proteins SMB1, SMD1, SMD2, SMD3, SME1, SMX3 and SMX2 (Sm proteins B, D1, D2, D3, E, F and G, respectively) that assemble in a heptameric protein ring on the Sm site of the small nuclear RNA to form the core snRNP, and at least 10 U1 snRNP-specific proteins SNP1/U1-70K, MUD1/U1-A, YHC1/U1-C, LUC7, NAM8, PRP39, PRP40, PRP42, SNU56 and SNU71. YHC1/U1-C interacts with U1 snRNA and the 5' splice-site region of the pre-mRNA.

It is found in the nucleus. Its function is as follows. Component of the spliceosomal U1 snRNP, which is essential for recognition of the pre-mRNA 5' splice-site and the subsequent assembly of the spliceosome. YHC1/U1-C is directly involved in initial 5' splice-site recognition for both constitutive and regulated alternative splicing. The interaction with the 5' splice-site seems to precede base-pairing between the pre-mRNA and the U1 snRNA. Stimulates commitment or early (E) complex formation by stabilizing the base pairing of the 5' end of the U1 snRNA and the 5' splice-site region. The protein is U1 small nuclear ribonucleoprotein C of Saccharomyces cerevisiae (strain ATCC 204508 / S288c) (Baker's yeast).